A 349-amino-acid polypeptide reads, in one-letter code: Outer membrane protein assembly factor BamC (349 aa).

The first 24 residues, 1 to 24 (MAILLQKSKVMKIAGMSLAMLLAA), serve as a signal peptide directing secretion. C25 carries the N-palmitoyl cysteine lipid modification. C25 carries S-diacylglycerol cysteine lipidation.

This sequence belongs to the BamC family. As to quaternary structure, part of the Bam complex, which is composed of the outer membrane protein BamA, and four lipoproteins BamB, BamC, BamD and BamE.

It localises to the cell outer membrane. Part of the outer membrane protein assembly complex, which is involved in assembly and insertion of beta-barrel proteins into the outer membrane. This is Outer membrane protein assembly factor BamC from Photorhabdus asymbiotica subsp. asymbiotica (strain ATCC 43949 / 3105-77) (Xenorhabdus luminescens (strain 2)).